The sequence spans 798 residues: MEDIGNNNFEIIDDKSDEKNDENFEDKNSRNNINEEQILSNQQQQQQQQQQQQQQQQQQQQQQQQQQQQQQEQQQFKNEVINTLHPKQPNNEYSLSSLSLSPQTPQINLSEKLISDNSNLNSNSNNNNKDIESGIQTKIKNIENRRNSINSDSSGTFNNEITNGRSNDNEIININNNVGVQVTFENICYKVLNKKYNEQKKIIKKLESGKIDIEDIESQVNKLPIDRIIEKELTILSNVSGIVEKGEMVALMGPSGSGKSTLLDILANRKSTGTITGKILVNGKEIGEAYKMFCSYVTQEEVFLETSTVYETLKFHADLRLPDMTDTEKDIRIKQVLKDVGLDRKLNSKIGGILPGGMIVKGLSGGEKKRVSIGCALVTNPSLLFLDEPTSGLDSLNSLKVMKVLLELTKMKGVTVVCSVHQPRPEIFYLFSNIMVVLKGRMVYSGSNILEYLSSIDSNYKCPPQMNPADFILDVCDEIVNNPSQYSTTVDTWEKYWKHEIQPTISNDPINIDIPKRVGFIYQYWVCQKRSYQSFVRNRVVFFSKIVIAILIGLLFSACFGTVGYDGLDQNEAQSVSALFFFIITSLNLLPYSSISTFVSIRTLFNSERASKIYHPFPYFIGSMLIEIVSSFFVVLIITTIIYCIVHLRWSFEAYILSLISFYMVFLASVFMVIAMSNIAGTVDLTFSYCTGVSVVLVLFSGFLVPINSLPDSFGWIHHIDYLFYGFSSIVIIQYRDFEFQCPQPPIPCLYSNGNNLIEFLGLKNWEYNKSIGILTIWIAFFYILAYIGLYKFNKEKR.

A disordered region spans residues 1–51; that stretch reads MEDIGNNNFEIIDDKSDEKNDENFEDKNSRNNINEEQILSNQQQQQQQQQQ. The segment covering 12 to 29 has biased composition (basic and acidic residues); sequence IDDKSDEKNDENFEDKNS. Residues 30–41 are compositionally biased toward polar residues; sequence RNNINEEQILSN. Positions 34–83 form a coiled coil; that stretch reads NEEQILSNQQQQQQQQQQQQQQQQQQQQQQQQQQQQQQEQQQFKNEVINT. The segment covering 42–51 has biased composition (low complexity); that stretch reads QQQQQQQQQQ. The 254-residue stretch at 211 to 464 folds into the ABC transporter domain; it reads IDIEDIESQV…SIDSNYKCPP (254 aa). 253–260 lines the ATP pocket; it reads GPSGSGKS. The next 7 helical transmembrane spans lie at 540 to 560, 579 to 599, 628 to 648, 656 to 676, 687 to 707, 713 to 733, and 771 to 791; these read VVFF…SACF, LFFF…STFV, IVSS…IVHL, ILSL…VIAM, FSYC…LVPI, SFGW…IVII, and SIGI…IGLY. The ABC transmembrane type-2 domain maps to 540–793; sequence VVFFSKIVIA…ILAYIGLYKF (254 aa).

This sequence belongs to the ABC transporter superfamily. ABCG family. Eye pigment precursor importer (TC 3.A.1.204) subfamily.

Its subcellular location is the membrane. The sequence is that of ABC transporter G family member 4 (abcG4) from Dictyostelium discoideum (Social amoeba).